A 448-amino-acid chain; its full sequence is Phosphoglucosamine mutase (448 aa).

The active-site Phosphoserine intermediate is Ser-104. Residues Ser-104, Asp-243, Asp-245, and Asp-247 each contribute to the Mg(2+) site. At Ser-104 the chain carries Phosphoserine.

This sequence belongs to the phosphohexose mutase family. It depends on Mg(2+) as a cofactor. Post-translationally, activated by phosphorylation.

The catalysed reaction is alpha-D-glucosamine 1-phosphate = D-glucosamine 6-phosphate. Catalyzes the conversion of glucosamine-6-phosphate to glucosamine-1-phosphate. The sequence is that of Phosphoglucosamine mutase from Xylella fastidiosa (strain 9a5c).